The primary structure comprises 432 residues: FAD-dependent monooxygenase pynG (432 aa).

Residues Glu32, Arg103, Asp315, and Ala328 each contribute to the FAD site.

This sequence belongs to the paxM FAD-dependent monooxygenase family. FAD is required as a cofactor.

Its pathway is secondary metabolite biosynthesis. FAD-dependent monooxygenase; part of the gene cluster that mediates the biosynthesis of pyranonigrins, a family of antioxidative compounds. The first step of pyranonigrins biosynthesis is performed by the hybrid PKS-NRPS synthetase that condenses 6 malonyl-CoA units to an acetyl starter unit, to form a 1,3,5-trioxotetradecane-6,8-dienyl-ACP. The enoyl reductase (ER) domain of pynA is likely to be functional during the first two rounds of polyketide chain extension, to generate the saturated C-C bonds of the alkyl side chain. PynA subsequently forms the amide bond between the acyl chain and L-serine. Although pynA has a terminal reductase domain, it appears to require the thioesterase pynI for the release of the straight-chain intermediate from pynA via the formation of a tetramic acid pyranonigrin J. The methyltransferase pynC then coverts pyranonigrin J to pyranonigrin I via N-methylation. The FAD-dependent monooxygenase pynG catalyzes an epoxidation-mediated cyclization to form the dihydro-gamma-pyrone moiety, followed by pynD-catalyzed oxidation of the alcohol to the ketone and enolization to yield the characteristic tetramic acid-fused gamma-pyrone core of pyranonigrin H. Pyranonigrin H is substrate of pynH for dehydration-mediated exo-methylene formation from the serine side chain to produce pyranonigrin E, before the oxidase pynE reduces the exo-methylene of pyranonigrin E into a pendant methyl to form pyranonigrin G. The FAD-linked oxidoreductase pynB performs the reverse reaction and converts pyranonigrin G back to pyranonigrin E. The polypeptide is FAD-dependent monooxygenase pynG (Aspergillus niger (strain ATCC MYA-4892 / CBS 513.88 / FGSC A1513)).